We begin with the raw amino-acid sequence, 541 residues long: Circadian clock oscillator protein KaiC (541 aa).

Residues 1-40 form a disordered region; that stretch reads MNQSLGPSEPEKPQDNTAEDSTEPTPDNHRADLSELRGIP. 2 consecutive KaiC domains span residues 21 to 268 and 282 to 541; these read STEP…INIF and VRVS…EEGL. Positions 26–35 are enriched in basic and acidic residues; that stretch reads PDNHRADLSE. ATP is bound by residues G70, T71, G72, K73, T74, L75, S110, K245, L246, R247, T249, H251, T261, T311, G312, T313, G314, K315, and T316. T74 is a Mg(2+) binding site. Residues T316 and E339 each coordinate Mg(2+). W352 lines the ATP pocket. Position 452 is a phosphoserine; by autocatalysis (S452). At T453 the chain carries Phosphothreonine; by autocatalysis. R472, K478, M479, R480, S482, H484, and K486 together coordinate ATP.

It belongs to the KaiC family. In terms of assembly, homohexamer; hexamerization is dependent on ATP-binding. The KaiABC complex composition changes during the circadian cycle to control KaiC phosphorylation. Complexes KaiC(6), KaiA(2-4):KaiC(6), KaiB(6):KaiC(6) and KaiC(6):KaiB(6):KaiA(12) are among the most important forms, many form cooperatively. KaiC interacts with SasA, activating its autokinase function and leading to RpaA activation. Mg(2+) serves as cofactor. Post-translationally, phosphorylated on serine and threonine residues by autocatalysis. Has a 4 step phosphorylation cycle; the autokinase acts first on Thr-453, then Ser-452. When Ser-452 is modified KaiC switches to an autophosphatase mode, acting first on phospho-Thr-453 then phospho-Ser-452.

It carries out the reaction L-seryl-[protein] + ATP = O-phospho-L-seryl-[protein] + ADP + H(+). The enzyme catalyses L-threonyl-[protein] + ATP = O-phospho-L-threonyl-[protein] + ADP + H(+). The catalysed reaction is ATP + H2O = ADP + phosphate + H(+). With respect to regulation, the interaction with KaiA enhances its phosphorylation status, while the interaction with KaiB decreases it. In terms of biological role, central component of the KaiABC oscillator complex, which constitutes the main circadian regulator in cyanobacteria. Complex composition changes during the circadian cycle to control KaiC phosphorylation. KaiA stimulates KaiC autophosphorylation, while KaiB sequesters KaiA, leading to KaiC autodephosphorylation. Clock output pathways impact the RpaA transcriptional regulator. KaiC enhances the autophosphorylation activity of SasA, which then transfers its phosphate group to RpaA to activate it. KaiB and KaiC together enhance the phospho-RpaA dephosphatase activity of CikA. Functionally, has a weak, temperature-independent ATPase activity; ATPase activity defines the circadian period. The phosphorylation state of KaiC modulates its ATPase activity and effects KaiB binding. The protein is Circadian clock oscillator protein KaiC of Parathermosynechococcus lividus (Thermostichus lividus).